A 1133-amino-acid chain; its full sequence is Fas-binding factor 1 (1133 aa).

Disordered regions lie at residues 89 to 198 and 211 to 544; these read LGLK…TPIR and IMAT…VPVQ. The span at 102 to 113 shows a compositional bias: basic and acidic residues; that stretch reads AAKDPGKGELPN. Residues 125–134 show a composition bias toward low complexity; it reads KKSLPSPSSS. Serine 142 is modified (phosphoserine). A compositionally biased stretch (polar residues) spans 165 to 182; it reads PPVTQSKTASDKSPSTVR. Basic and acidic residues-rich tracts occupy residues 221 to 245 and 259 to 276; these read PKAE…DELL and TGEH…RPQD. Over residues 277–286 the composition is skewed to acidic residues; sequence SEDMWGDEDF. Residues 295–310 are compositionally biased toward low complexity; it reads VVSSEGRQSRRQSVSR. The span at 325 to 336 shows a compositional bias: polar residues; that stretch reads SKQSPPMASSPI. Positions 415–424 are enriched in basic and acidic residues; the sequence is ASKEEKEDWL. Polar residues predominate over residues 459–469; that stretch reads SGSQPLTSTQG. The segment covering 473–482 has biased composition (low complexity); that stretch reads AAAGGSSGTT. Coiled-coil stretches lie at residues 577-727 and 773-870; these read AELQ…VDAA and IRQR…EEQK. Residue lysine 960 forms a Glycyl lysine isopeptide (Lys-Gly) (interchain with G-Cter in SUMO2) linkage. The segment at 1062 to 1085 is disordered; sequence AASSQSALMPPAPTTRWCSQPPTG.

As to quaternary structure, may interact with FAS cytoplasmic domain. Interacts with PARD3. Interacts with TRAPPC14. In terms of tissue distribution, present in various epithelial cells (at protein level).

The protein resides in the cytoplasm. The protein localises to the cytoskeleton. It is found in the microtubule organizing center. It localises to the centrosome. Its subcellular location is the centriole. The protein resides in the spindle pole. The protein localises to the cell junction. Its function is as follows. Keratin-binding protein required for epithelial cell polarization. Involved in apical junction complex (AJC) assembly via its interaction with PARD3. Required for ciliogenesis. This is Fas-binding factor 1 (FBF1) from Homo sapiens (Human).